We begin with the raw amino-acid sequence, 276 residues long: uncharacterized protein (276 aa).

The N-terminal stretch at 1–29 (MKSHVRSFKTYIRDEIIKKGGWVNAHAHA) is a signal peptide.

It belongs to the metallo-dependent hydrolases superfamily.

This is an uncharacterized protein from Haemophilus influenzae (strain ATCC 51907 / DSM 11121 / KW20 / Rd).